We begin with the raw amino-acid sequence, 662 residues long: ABC transporter G family member 25 (662 aa).

The interval 1-30 (MSAFDGVENQMNGPDSSPRLSQDPREPRSL) is disordered. Polar residues predominate over residues 9–20 (NQMNGPDSSPRL). Asn-56 is a glycosylation site (N-linked (GlcNAc...) asparagine). An ABC transporter domain is found at 69–308 (QKPSDETRST…FESVGFSPAF (240 aa)). 101 to 108 (GPSGSGKS) is an ATP binding site. Asn-122 carries N-linked (GlcNAc...) asparagine glycosylation. Transmembrane regions (helical) follow at residues 374–394 (VNGG…CILL), 406–426 (FDLL…LMWW), 437–457 (LGLL…NAVF), 489–509 (LSME…MVYL), 522–542 (VLLL…AAIM), 547–567 (ASTI…YYVN), and 629–649 (VIGD…FFGY). Residues 388–594 (SQLCILLHRL…CYRLLVAIQY (207 aa)) enclose the ABC transmembrane type-2 domain.

Belongs to the ABC transporter superfamily. ABCG family. Eye pigment precursor importer (TC 3.A.1.204) subfamily. Mainly expressed in vascular tissues,predominantly in phloem companion cells, with highest levels in roots and seeds, and lower levels in seedlings, stems, leaves and flowers. Mostly observed in inflorescence meristems relative to cauline leaves and developing siliques. In seeds, mainly expressed in the endosperm and, to a lesser extent, in the embryo.

It is found in the cell membrane. It carries out the reaction abscisate(in) + ATP + H2O = abscisate(out) + ADP + phosphate + H(+). With respect to regulation, ADP and vanadate (ABC transporters inhibitor) inhibit the ATP-dependent abscisic acid (ABA) uptake. Its function is as follows. High affinity abscisic acid (ABA) transporter that mediates the export of ABA, with a preference for (+)-ABA, through the plasma membrane, especially in vascular tissues (e.g. phloem companion cells), and is involved in the intercellular ABA signaling pathway. Together with ABCG31, export ABA from the endosperm to deliver it to the embryo via ABCG30 and ABCG40-mediated import to suppress radicle extension and subsequent embryonic growth. The protein is ABC transporter G family member 25 of Arabidopsis thaliana (Mouse-ear cress).